Reading from the N-terminus, the 259-residue chain is Gene 2 protein (259 aa).

Basic and acidic residues-rich tracts occupy residues 1–12 (MPPTELEKKRGE) and 21–36 (QKQH…AKRK). Positions 1-36 (MPPTELEKKRGEYNQIAIDAQKQHAPTDEKREAKRK) are disordered.

The sequence is that of Gene 2 protein (2) from Mycobacterium (Mycobacteriophage L5).